The chain runs to 279 residues: Energy-coupling factor transporter ATP-binding protein EcfA1 (279 aa).

One can recognise an ABC transporter domain in the interval 5–240; the sequence is IELKKVTFNY…GDELLQLGLD (236 aa). 40–47 is an ATP binding site; that stretch reads GHNGSGKS.

This sequence belongs to the ABC transporter superfamily. Energy-coupling factor EcfA family. As to quaternary structure, forms a stable energy-coupling factor (ECF) transporter complex composed of 2 membrane-embedded substrate-binding proteins (S component), 2 ATP-binding proteins (A component) and 2 transmembrane proteins (T component).

It is found in the cell membrane. In terms of biological role, ATP-binding (A) component of a common energy-coupling factor (ECF) ABC-transporter complex. Unlike classic ABC transporters this ECF transporter provides the energy necessary to transport a number of different substrates. The sequence is that of Energy-coupling factor transporter ATP-binding protein EcfA1 from Streptococcus pyogenes serotype M5 (strain Manfredo).